The primary structure comprises 188 residues: Translation machinery-associated protein 22 (188 aa).

The SUI1 domain maps to 96–167 (VTIKRIERNK…EIEEFLLEKY (72 aa)).

It belongs to the DENR family. As to quaternary structure, interacts with the 40S ribosomal subunit.

The protein resides in the cytoplasm. This chain is Translation machinery-associated protein 22 (TMA22), found in Chaetomium globosum (strain ATCC 6205 / CBS 148.51 / DSM 1962 / NBRC 6347 / NRRL 1970) (Soil fungus).